The following is a 470-amino-acid chain: UDP-N-acetylmuramate--L-alanine ligase (470 aa).

118 to 124 (GTHGKTT) lines the ATP pocket.

Belongs to the MurCDEF family.

It is found in the cytoplasm. The catalysed reaction is UDP-N-acetyl-alpha-D-muramate + L-alanine + ATP = UDP-N-acetyl-alpha-D-muramoyl-L-alanine + ADP + phosphate + H(+). It participates in cell wall biogenesis; peptidoglycan biosynthesis. Functionally, cell wall formation. This chain is UDP-N-acetylmuramate--L-alanine ligase, found in Cereibacter sphaeroides (strain ATCC 17029 / ATH 2.4.9) (Rhodobacter sphaeroides).